Here is a 344-residue protein sequence, read N- to C-terminus: L-rhamnose-proton symporter (344 aa).

10 helical membrane-spanning segments follow: residues 4–24, 38–58, 68–88, 101–121, 137–157, 175–195, 214–234, 259–279, 290–310, and 323–343; these read AITM…CFYA, WSVG…ALLL, FSLS…IGNI, MGIG…TPII, TLLG…AGQL, LVLA…MNAA, LPSY…FCFI, VLLS…YAWG, ISWM…GLVL, and VLSL…IGMA.

It belongs to the L-rhamnose transporter (TC 2.A.7.6) family.

The protein resides in the cell inner membrane. It catalyses the reaction L-rhamnopyranose(in) + H(+)(in) = L-rhamnopyranose(out) + H(+)(out). Its function is as follows. Uptake of L-rhamnose across the cytoplasmic membrane with the concomitant transport of protons into the cell (symport system). This chain is L-rhamnose-proton symporter, found in Shigella dysenteriae serotype 1 (strain Sd197).